The sequence spans 144 residues: 3-dehydroquinate dehydratase (144 aa).

Tyrosine 22 serves as the catalytic Proton acceptor. Asparagine 73, histidine 79, and aspartate 86 together coordinate substrate. Histidine 99 functions as the Proton donor in the catalytic mechanism. Residues 100-101 (IS) and arginine 110 contribute to the substrate site.

The protein belongs to the type-II 3-dehydroquinase family. In terms of assembly, homododecamer.

The catalysed reaction is 3-dehydroquinate = 3-dehydroshikimate + H2O. It participates in metabolic intermediate biosynthesis; chorismate biosynthesis; chorismate from D-erythrose 4-phosphate and phosphoenolpyruvate: step 3/7. In terms of biological role, catalyzes a trans-dehydration via an enolate intermediate. This is 3-dehydroquinate dehydratase from Mycobacteroides abscessus (strain ATCC 19977 / DSM 44196 / CCUG 20993 / CIP 104536 / JCM 13569 / NCTC 13031 / TMC 1543 / L948) (Mycobacterium abscessus).